Here is a 220-residue protein sequence, read N- to C-terminus: MGKKKQKKGQGSRLEVIFDEEKRREYLTGFHKRKMQRRKTAVEEIKRKIKEEQKKMKEERHKEYMKMLKEREEALCELEENDELEEMVTSKTESVRYDHPNHTVTVTTISDLDLSGIRVPPLGNAEQKQEEEKVEEENEKGADEEKPKTSVSLPKKSGDPFLSKKICSLTASLHARSQRKSGKRPSRTNENKKQTSSKMSGRTSKTQRRKQTGKTRRRRN.

Residues 31–86 (HKRKMQRRKTAVEEIKRKIKEEQKKMKEERHKEYMKMLKEREEALCELEENDELEE) adopt a coiled-coil conformation. The segment at 109 to 220 (ISDLDLSGIR…QTGKTRRRRN (112 aa)) is disordered. Positions 139–148 (EKGADEEKPK) are enriched in basic and acidic residues. Basic residues-rich tracts occupy residues 176-186 (RSQRKSGKRPS) and 205-220 (KTQR…RRRN).

It belongs to the RRP17 family.

It localises to the nucleus. Its subcellular location is the nucleolus. In terms of biological role, may bind to rRNA. This chain is Nucleolar protein 12 (nol12), found in Xenopus laevis (African clawed frog).